A 363-amino-acid polypeptide reads, in one-letter code: Insulin gene enhancer protein ISL-3 (363 aa).

2 LIM zinc-binding domains span residues 27–80 (CVGC…CKRD) and 89–143 (CAKC…RADH). Positions 191 to 250 (TTRVRTVLNEKQLHTLRTCYNANPRPDALMREQLVEMTGLSPRVIRVWFQNKRCKDKKRS) form a DNA-binding region, homeobox. Residues 328–363 (FSESGSLGNSSGSDVTSLSSHLPDTPNSMVPSPVET) form a disordered region. Residues 329-340 (SESGSLGNSSGS) show a composition bias toward low complexity. Polar residues predominate over residues 341–363 (DVTSLSSHLPDTPNSMVPSPVET).

The protein localises to the nucleus. Binds to one of the cis-acting domain of the insulin gene enhancer. May be involved in subtype specialization of primary motoneurons. This is Insulin gene enhancer protein ISL-3 (isl3) from Oncorhynchus tshawytscha (Chinook salmon).